A 356-amino-acid polypeptide reads, in one-letter code: Fructose import permease protein FruF (356 aa).

7 helical membrane passes run 25 to 45 (IVAF…FLAL), 77 to 97 (LVIS…VAGA), 113 to 133 (ILIA…LVSF), 180 to 200 (FILG…LVGL), 231 to 251 (ILFL…LFAT), 268 to 290 (MYAI…SLAG), and 308 to 328 (LGVN…VICV).

It belongs to the binding-protein-dependent transport system permease family. In terms of assembly, the complex is composed of an ATP-binding protein (FruK), two transmembrane proteins (FruF and FruG) and a solute-binding protein (FruE).

It localises to the cell membrane. Its function is as follows. Part of the high-affinity ABC transporter complex FruEKFG involved in fructose uptake. Can also transport ribose and xylose, with lower affinity. Probably responsible for the translocation of the substrate across the membrane. This Bifidobacterium longum (strain NCC 2705) protein is Fructose import permease protein FruF.